A 520-amino-acid chain; its full sequence is MARARRVKRDSATNIYRTCKQAGTCPPDVLNKVENTTIADKILQYGSAGVFFGGLGISTGKGTGGTTGYVPLGEGPIRVGGTPTVIRPSLVPDTIGPSDIIPVDTLNPVEPTSSSIVPLTESSGPDLLPGEVETIAEIHPGPVVPSTDTPVTTTSRGASAVLEVAPEPTPPSRVRVSGTQYHNPSFQVITESTPAQGESSLADHILVTSGSGGQTIGGTASDLIELQEFPTRYSFEIDEPTPPRQSSTPLQRIRTALRRRGGLTNRRLVQQVPVEDPLFLSQPSRLVRFQFDNPVFEDEVTQIFEQDLNDFQEPPDRDFLDIRSLGRPQYSETPAGYVRVSRLGQRRTIRTRSGAQIGSQVHFYRDLSSINTEDPIELQLLGQHSGDATIVQGLTESTFVDVNVDENPLAEDFSISAHSDDLLLDEANEDFSGSQLVVGGRRSTSTYTVPRVETTRSASYYTQDIQGYYVSYPEDRDTSKDIIYPMPDLPVVIIHTYDTSGDFYLHPSLTTRRRRKRKYL.

The short motif at 1–10 (MARARRVKRD) is the Nuclear localization signal element. The cysteines at positions 19 and 25 are disulfide-linked. A Nuclear localization signal motif is present at residues 511–519 (TRRRRKRKY).

This sequence belongs to the papillomaviridae L2 protein family. In terms of assembly, interacts with major capsid protein L1. Interacts with E2; this interaction inhibits E2 transcriptional activity but not the DNA replication function E2. Interacts with host GADD45GIP1. Interacts with host HSPA8; this interaction is required for L2 nuclear translocation. Interacts with host importins KPNB2 and KPNB3. Forms a complex with importin alpha2-beta1 heterodimers via interaction with the importin alpha2 adapter. Interacts with host DYNLT1; this interaction is essential for virus intracellular transport during entry. Interacts (via C-terminus) with host retromer subunits VPS35 and VPS29. In terms of processing, highly phosphorylated.

The protein localises to the virion. Its subcellular location is the host nucleus. It is found in the host early endosome. The protein resides in the host Golgi apparatus. Minor protein of the capsid that localizes along the inner surface of the virion, within the central cavities beneath the L1 pentamers. Plays a role in capsid stabilization through interaction with the major capsid protein L1. Once the virion enters the host cell, L2 escorts the genomic DNA into the nucleus by promoting escape from the endosomal compartments and traffic through the host Golgi network. Mechanistically, the C-terminus of L2 possesses a cell-penetrating peptide that protudes from the host endosome, interacts with host cytoplasmic retromer cargo and thereby mediates the capsid delivery to the host trans-Golgi network. Plays a role through its interaction with host dynein in the intracellular microtubule-dependent transport of viral capsid toward the nucleus. Mediates the viral genome import into the nucleus through binding to host importins. Once within the nucleus, L2 localizes viral genomes to host PML bodies in order to activate early gene expression for establishment of infection. Later on, promotes late gene expression by interacting with the viral E2 protein and by inhibiting its transcriptional activation functions. During virion assembly, encapsidates the genome by direct interaction with the viral DNA. The polypeptide is Minor capsid protein L2 (Human papillomavirus 25).